Consider the following 96-residue polypeptide: Putative septation protein SpoVG (96 aa).

This sequence belongs to the SpoVG family.

In terms of biological role, could be involved in septation. The polypeptide is Putative septation protein SpoVG (Clostridium kluyveri (strain ATCC 8527 / DSM 555 / NBRC 12016 / NCIMB 10680 / K1)).